The primary structure comprises 428 residues: Cytochrome bc complex cytochrome b subunit (428 aa).

Composition is skewed to low complexity over residues 1–15 (MAEN…TAPA) and 21–52 (APGA…AAAP). The tract at residues 1–72 (MAENTPKPAA…RPDPNPFKDS (72 aa)) is disordered. The segment covering 59–72 (PPVDRPDPNPFKDS) has biased composition (basic and acidic residues). The helical transmembrane segment at 110-130 (YFGGLGLFFFVIQILTGLLLL) threads the bilayer. Residues H161 and H175 each coordinate heme b. 6 helical membrane passes run 162-182 (AWSA…TFFM), 193-213 (WVSG…GYLL), 260-280 (LHVV…LTLV), 312-331 (GIGW…MFPW), 369-389 (ELLA…VPFI), and 401-421 (IFTI…YRVY). H261 and H276 together coordinate heme b.

It belongs to the cytochrome b family. It depends on heme b as a cofactor.

The protein localises to the cell inner membrane. Its function is as follows. Component of the green S-bacteria bc complex, which consists of the Rieske protein and cytochrome b subunit but appears to lack a cytochrome c1-equivalent. This complex has a comparatively low redox potential. The sequence is that of Cytochrome bc complex cytochrome b subunit (petB) from Chlorobaculum thiosulfatiphilum (Chlorobium limicola f.sp. thiosulfatophilum).